The following is a 947-amino-acid chain: Bifunctional glutamine synthetase adenylyltransferase/adenylyl-removing enzyme (947 aa).

The interval 1–440 (MTPLSSPLSQ…VFNELIGDDE (440 aa)) is adenylyl removase. The interval 450–947 (SEPWREVWQD…ASWRKWLVAV (498 aa)) is adenylyl transferase.

This sequence belongs to the GlnE family. The cofactor is Mg(2+).

The enzyme catalyses [glutamine synthetase]-O(4)-(5'-adenylyl)-L-tyrosine + phosphate = [glutamine synthetase]-L-tyrosine + ADP. The catalysed reaction is [glutamine synthetase]-L-tyrosine + ATP = [glutamine synthetase]-O(4)-(5'-adenylyl)-L-tyrosine + diphosphate. Its function is as follows. Involved in the regulation of glutamine synthetase GlnA, a key enzyme in the process to assimilate ammonia. When cellular nitrogen levels are high, the C-terminal adenylyl transferase (AT) inactivates GlnA by covalent transfer of an adenylyl group from ATP to specific tyrosine residue of GlnA, thus reducing its activity. Conversely, when nitrogen levels are low, the N-terminal adenylyl removase (AR) activates GlnA by removing the adenylyl group by phosphorolysis, increasing its activity. The regulatory region of GlnE binds the signal transduction protein PII (GlnB) which indicates the nitrogen status of the cell. This chain is Bifunctional glutamine synthetase adenylyltransferase/adenylyl-removing enzyme, found in Salmonella paratyphi A (strain ATCC 9150 / SARB42).